The following is a 207-amino-acid chain: Suppressor of IKBKE 1 (207 aa).

Coiled-coil stretches lie at residues 70–102 (HILL…DALE) and 164–192 (CKVQ…ESLQ).

It belongs to the SIKE family. In terms of assembly, interacts with IKBKE and TBK1 via its coiled coil region. Interaction with TBK1 is disrupted upon viral infection or TLR3 stimulation. Interacts with CDC42BPB. Interacts with SIKE1 which mediates association with the STRIPAK core complex composed of PP2A catalytic and scaffolding subunits, the striatins (PP2A regulatory subunits), the striatin-associated proteins MOB4, STRIP1 and STRIP2, PDCD10 and members of the STE20 kinases, such as STK24 and STK26.

It localises to the cytoplasm. Its function is as follows. Physiological suppressor of IKK-epsilon and TBK1 that plays an inhibitory role in virus- and TLR3-triggered IRF3. Inhibits TLR3-mediated activation of interferon-stimulated response elements (ISRE) and the IFN-beta promoter. May act by disrupting the interactions of IKBKE or TBK1 with TICAM1/TRIF, IRF3 and RIGI. Does not inhibit NF-kappa-B activation pathways. Associates with the striatin-interacting phosphatase and kinase (STRIPAK) core complex, forming the extended (SIKE1:SLMAP)STRIPAK complex. The (SIKE1:SLMAP)STRIPAK complex dephosphorylates STK3 leading to the inhibition of Hippo signaling and the control of cell growth. This Mus musculus (Mouse) protein is Suppressor of IKBKE 1 (Sike1).